A 101-amino-acid chain; its full sequence is Small ribosomal subunit protein uS14 (101 aa).

Residues 1 to 21 form a disordered region; it reads MAKTSAVEKNKRRRKSVAQQA.

Belongs to the universal ribosomal protein uS14 family. Part of the 30S ribosomal subunit. Contacts proteins S3 and S10.

Its function is as follows. Binds 16S rRNA, required for the assembly of 30S particles and may also be responsible for determining the conformation of the 16S rRNA at the A site. This is Small ribosomal subunit protein uS14 from Agrobacterium fabrum (strain C58 / ATCC 33970) (Agrobacterium tumefaciens (strain C58)).